Consider the following 463-residue polypeptide: tRNA dimethylallyltransferase 9 (463 aa).

57–64 contributes to the ATP binding site; that stretch reads GPTGAGKS. Residue 59 to 64 participates in substrate binding; sequence TGAGKS. The tract at residues 82–85 is interaction with substrate tRNA; sequence DSVQ.

The protein belongs to the IPP transferase family. It depends on Mg(2+) as a cofactor. Expressed ubiquitously, with highest expression in proliferating tissues.

It is found in the cytoplasm. The catalysed reaction is adenosine(37) in tRNA + dimethylallyl diphosphate = N(6)-dimethylallyladenosine(37) in tRNA + diphosphate. Functionally, catalyzes the transfer of a dimethylallyl group onto the adenine at position 37 in tRNAs that read codons beginning with uridine, leading to the formation of N6-(dimethylallyl)adenosine (i(6)A). Involved in the cis-type cytokinin biosynthesis. The protein is tRNA dimethylallyltransferase 9 (IPT9) of Arabidopsis thaliana (Mouse-ear cress).